The following is a 1071-amino-acid chain: ATP-dependent helicase/deoxyribonuclease subunit B (1071 aa).

The protein belongs to the helicase family. AddB/RexB type 2 subfamily. In terms of assembly, heterodimer of AddA and RexB. Mg(2+) serves as cofactor.

Its function is as follows. The heterodimer acts as both an ATP-dependent DNA helicase and an ATP-dependent, dual-direction single-stranded exonuclease. Recognizes the chi site generating a DNA molecule suitable for the initiation of homologous recombination. This subunit has 5' -&gt; 3' nuclease activity but not helicase activity. The sequence is that of ATP-dependent helicase/deoxyribonuclease subunit B from Streptococcus pyogenes serotype M12 (strain MGAS2096).